A 283-amino-acid polypeptide reads, in one-letter code: 4-diphosphocytidyl-2-C-methyl-D-erythritol kinase (283 aa).

The active site involves Lys10. 94 to 104 (PVAAGLAGGSS) provides a ligand contact to ATP. Asp136 is a catalytic residue.

This sequence belongs to the GHMP kinase family. IspE subfamily.

It catalyses the reaction 4-CDP-2-C-methyl-D-erythritol + ATP = 4-CDP-2-C-methyl-D-erythritol 2-phosphate + ADP + H(+). It functions in the pathway isoprenoid biosynthesis; isopentenyl diphosphate biosynthesis via DXP pathway; isopentenyl diphosphate from 1-deoxy-D-xylulose 5-phosphate: step 3/6. In terms of biological role, catalyzes the phosphorylation of the position 2 hydroxy group of 4-diphosphocytidyl-2C-methyl-D-erythritol. This is 4-diphosphocytidyl-2-C-methyl-D-erythritol kinase from Enterococcus faecalis (strain ATCC 700802 / V583).